Here is a 29-residue protein sequence, read N- to C-terminus: Cytochrome b6-f complex subunit 8 (29 aa).

The chain crosses the membrane as a helical span at residues 3–23 (IISLGWSSLLVVFTFSLSLVV).

The protein belongs to the PetN family. As to quaternary structure, the 4 large subunits of the cytochrome b6-f complex are cytochrome b6, subunit IV (17 kDa polypeptide, PetD), cytochrome f and the Rieske protein, while the 4 small subunits are PetG, PetL, PetM and PetN. The complex functions as a dimer.

The protein localises to the plastid. It is found in the chloroplast thylakoid membrane. Functionally, component of the cytochrome b6-f complex, which mediates electron transfer between photosystem II (PSII) and photosystem I (PSI), cyclic electron flow around PSI, and state transitions. The chain is Cytochrome b6-f complex subunit 8 from Rhodomonas salina (Cryptomonas salina).